Consider the following 130-residue polypeptide: Small ribosomal subunit protein uS9 (130 aa).

The disordered stretch occupies residues 106 to 130; the sequence is RDSRKVERKKPGLKKARKASQFSKR. Residues 111–130 show a composition bias toward basic residues; it reads VERKKPGLKKARKASQFSKR.

This sequence belongs to the universal ribosomal protein uS9 family.

In Streptococcus pneumoniae (strain ATCC 700669 / Spain 23F-1), this protein is Small ribosomal subunit protein uS9.